The following is a 1135-amino-acid chain: MVDLESEVPPLPPRYRFRDLLLGDQGWQNDDRVQVEFYMNENTFKERLKLFFIKNQRSSLRIRLFNFSLKLLSCLLYIIRVLLENPSQGNEWSHIFWVNRSLPLWGLQVSVALISLFETILLGYLSYKGNIWEQILRIPFILEIINAVPFIISIFWPSLRNLFVPVFLNCWLAKHALENMINDLHRAIQRTQSAMFNQVLILISTLLCLIFTCICGIQHLERIGKKLNLFDSLYFCIVTFSTVGFGDVTPETWSSKLFVVAMICVALVVLPIQFEQLAYLWMERQKSGGNYSRHRAQTEKHVVLCVSSLKIDLLMDFLNEFYAHPRLQDYYVVILCPTEMDVQVRRVLQIPMWSQRVIYLQGSALKDQDLLRAKMDDAEACFILSSRCEVDRTSSDHQTILRAWAVKDFAPNCPLYVQILKPENKFHIKFADHVVCEEEFKYAMLALNCICPATSTLITLLVHTSRGQEGQQSPEQWQKMYGRCSGNEVYHIVLEESTFFAEYEGKSFTYASFHAHKKFGVCLIGVRREDNKNILLNPGPRYIMNSTDICFYINITKEENSAFKNQDQQRKSNVSRSFYHGPSRLPVHSIIASMGTVAIDLQDTSCRSASGPTLSLPTEGSKEIRRPSIAPVLEVADTSSIQTCDLLSDQSEDETTPDEEMSSNLEYAKGYPPYSPYIGSSPTFCHLLHEKVPFCCLRLDKSCQHNYYEDAKAYGFKNKLIIVAAETAGNGLYNFIVPLRAYYRPKKELNPIVLLLDNPPDMHFLDAICWFPMVYYMVGSIDNLDDLLRCGVTFAANMVVVDKESTMSAEEDYMADAKTIVNVQTLFRLFSSLSIITELTHPANMRFMQFRAKDCYSLALSKLEKKERERGSNLAFMFRLPFAAGRVFSISMLDTLLYQSFVKDYMISITRLLLGLDTTPGSGFLCSMKITADDLWIRTYARLYQKLCSSTGDVPIGIYRTESQKLTTSESQISISVEEWEDTKDSKEQGHHRSNHRNSTSSDQSDHPLLRRKSMQWARRLSRKGPKHSGKTAEKITQQRLNLYRRSERQELAELVKNRMKHLGLSTVGYDEMNDHQSTLSYILINPSPDTRIELNDVVYLIRPDPLAYLPNSEPSRRNSICNVTGQDSREETQL.

At 1 to 63 (MVDLESEVPP…KNQRSSLRIR (63 aa)) the chain is on the cytoplasmic side. Residues 64-84 (LFNFSLKLLSCLLYIIRVLLE) form a helical membrane-spanning segment. Topologically, residues 85–101 (NPSQGNEWSHIFWVNRS) are extracellular. Asparagine 99 carries N-linked (GlcNAc...) asparagine glycosylation. A helical transmembrane segment spans residues 102–122 (LPLWGLQVSVALISLFETILL). Over 123 to 137 (GYLSYKGNIWEQILR) the chain is Cytoplasmic. A helical membrane pass occupies residues 138–158 (IPFILEIINAVPFIISIFWPS). At 159-164 (LRNLFV) the chain is on the extracellular side. The helical transmembrane segment at 165-185 (PVFLNCWLAKHALENMINDLH) threads the bilayer. Residues 186-198 (RAIQRTQSAMFNQ) lie on the Cytoplasmic side of the membrane. A helical membrane pass occupies residues 199–219 (VLILISTLLCLIFTCICGIQH). At 220–228 (LERIGKKLN) the chain is on the extracellular side. The segment at residues 229–249 (LFDSLYFCIVTFSTVGFGDVT) is an intramembrane region (pore-forming). At 250 to 256 (PETWSSK) the chain is on the extracellular side. Residues 257-277 (LFVVAMICVALVVLPIQFEQL) traverse the membrane as a helical segment. At 278–1135 (AYLWMERQKS…GQDSREETQL (858 aa)) the chain is on the cytoplasmic side. 2 consecutive RCK N-terminal domains span residues 299 to 435 (EKHV…DHVV) and 718 to 858 (NKLI…CYSL). 3 disordered regions span residues 977 to 1010 (VEEW…HPLL), 1017 to 1036 (WARR…AEKI), and 1113 to 1135 (SEPS…ETQL). Residues 1017–1030 (WARRLSRKGPKHSG) are compositionally biased toward basic residues. Polar residues predominate over residues 1118-1127 (RNSICNVTGQ).

The protein belongs to the potassium channel family. Calcium-activated (TC 1.A.1.3) subfamily. KCa4.2/KCNT2 sub-subfamily. As to quaternary structure, homotetramer. Forms heteromeric channels with KCNT1; these heterodimer channels differ from the homomers in their unitary conductance, kinetic behavior, subcellular localization, and response to activation of protein kinase C. Post-translationally, phosphorylated by protein kinase C. Phosphorylation of the C-terminal domain inhibits channel activity.

The protein localises to the cell membrane. It carries out the reaction K(+)(in) = K(+)(out). Its activity is regulated as follows. Are normally in a closed state unless activated by an increase in intracellular Na(+) and Cl(-). Inhibited upon stimulation of G-protein coupled receptors, such as CHRM1 and GRM1. There is conflicting data about the effect of ATP on KNCT2 channels activity. Intracellular ATP was initially report to inhibit the channel activity. However, others studies conclude that KNCT2 channels are not inhibited by intracellular ATP. Functionally, sodium-activated and chloride-activated potassium channel. Produces rapidly activating outward rectifier K(+) currents. Contributes to regulate neuronal excitability. This is Potassium channel subfamily T member 2 (KCNT2) from Homo sapiens (Human).